A 284-amino-acid polypeptide reads, in one-letter code: 4-diphosphocytidyl-2-C-methyl-D-erythritol kinase (284 aa).

Lys-14 is a catalytic residue. An ATP-binding site is contributed by 98–108 (PMGGGLGGGSS). Asp-140 is a catalytic residue.

Belongs to the GHMP kinase family. IspE subfamily.

It catalyses the reaction 4-CDP-2-C-methyl-D-erythritol + ATP = 4-CDP-2-C-methyl-D-erythritol 2-phosphate + ADP + H(+). It participates in isoprenoid biosynthesis; isopentenyl diphosphate biosynthesis via DXP pathway; isopentenyl diphosphate from 1-deoxy-D-xylulose 5-phosphate: step 3/6. Functionally, catalyzes the phosphorylation of the position 2 hydroxy group of 4-diphosphocytidyl-2C-methyl-D-erythritol. In Shewanella baltica (strain OS223), this protein is 4-diphosphocytidyl-2-C-methyl-D-erythritol kinase.